Consider the following 383-residue polypeptide: MRNSVKWETELTGDRSRRREADESSETPKIVKKEKRSKTVIASLRPQQPPIQEEEEQGIADRRAIRSQYLALTHKIKDAKDDLTKIDSNKFNSIINEVENLHQKVRKPREQIADAEALLDLTNSVVSSVKSQSAHGGVSPAEFVNALINGFGKTSLRIDADENTQVSMKWKDLGFTVCSTVLVSCGCTTMMGPMYSEMKQRKSRVGNRKRTKPGAGVKPEEVDDTEAEKKSDTDNNMAVMFNILRKNKRVKIENLVLNRKSFAQTAENMFALSFLVKDGRVEITVDNNGSHFVEPRNAPAANLVLSGEVAYNHFVLRFDYKDWEPMSKMVAVGEELMPLRETKVAQDSIELSRKQGSVIQEETVVEDSSNMEGDNEDSKNGGL.

Over residues 1–22 (MRNSVKWETELTGDRSRRREAD) the composition is skewed to basic and acidic residues. 3 disordered regions span residues 1 to 59 (MRNS…EQGI), 198 to 231 (MKQR…EKKS), and 355 to 383 (QGSV…NGGL). Residues 201–212 (RKSRVGNRKRTK) show a composition bias toward basic residues. Over residues 355–372 (QGSVIQEETVVEDSSNME) the composition is skewed to polar residues.

This sequence belongs to the NSE4 family. In terms of assembly, interacts with SMC5, SMC6A or SMC6B. The SMC5-SMC6 complex is composed of the SMC5 and SMC6 heterodimer attached via their hinge domain and from the non-SMC subunit NSE4A or NSE4B. In terms of tissue distribution, not expressed in seedlings, rosette leaves and floral buds.

The protein resides in the nucleus. Functionally, component of the SMC5-SMC6 complex, that promotes sister chromatid alignment after DNA damage and facilitates double-stranded DNA breaks (DSBs) repair via homologous recombination between sister chromatids. The polypeptide is Non-structural maintenance of chromosomes element 4 homolog B (NSE4B) (Arabidopsis thaliana (Mouse-ear cress)).